A 415-amino-acid chain; its full sequence is 3-isopropylmalate dehydratase large subunit (415 aa).

C295, C353, and C356 together coordinate [4Fe-4S] cluster.

The protein belongs to the aconitase/IPM isomerase family. LeuC type 2 subfamily. In terms of assembly, heterodimer of LeuC and LeuD. [4Fe-4S] cluster serves as cofactor.

The enzyme catalyses (2R,3S)-3-isopropylmalate = (2S)-2-isopropylmalate. Its pathway is amino-acid biosynthesis; L-leucine biosynthesis; L-leucine from 3-methyl-2-oxobutanoate: step 2/4. Catalyzes the isomerization between 2-isopropylmalate and 3-isopropylmalate, via the formation of 2-isopropylmaleate. The polypeptide is 3-isopropylmalate dehydratase large subunit (Pyrobaculum arsenaticum (strain DSM 13514 / JCM 11321 / PZ6)).